The sequence spans 409 residues: uncharacterized protein (409 aa).

The EAL domain maps to 1–209 (MRVFVARQPI…GHDLSTHFYS (209 aa)). The 190-residue stretch at 203-392 (LSTHFYSYYE…GNQLDKEEAY (190 aa)) folds into the HDOD domain.

This is an uncharacterized protein from Bacillus subtilis (strain 168).